The chain runs to 315 residues: Glycine--tRNA ligase alpha subunit (315 aa).

The protein belongs to the class-II aminoacyl-tRNA synthetase family. As to quaternary structure, tetramer of two alpha and two beta subunits.

The protein localises to the cytoplasm. The catalysed reaction is tRNA(Gly) + glycine + ATP = glycyl-tRNA(Gly) + AMP + diphosphate. This Sorangium cellulosum (strain So ce56) (Polyangium cellulosum (strain So ce56)) protein is Glycine--tRNA ligase alpha subunit.